The primary structure comprises 610 residues: Chitinase 63 (610 aa).

Residues 1 to 30 form the signal peptide; sequence MRFRHKAAALAATLALPLAGLVGLASPAQA. The 104-residue stretch at 31-134 folds into the CBM2 domain; that stretch reads ATSATATFQK…KINGGSCDGS (104 aa). Disordered regions lie at residues 125 to 153 and 208 to 239; these read KINGGSCDGSSVPGDEAPSAPGTPTASNI and ARDTGDQTGPASGSVKVTTTGGDGGEPNPNPG. The 86-residue stretch at 144 to 229 folds into the Fibronectin type-III domain; the sequence is APGTPTASNI…GSVKVTTTGG (86 aa). The span at 213 to 224 shows a compositional bias: polar residues; sequence DQTGPASGSVKV. A GH18 domain is found at 241–610; that stretch reads EVKMGYFTNW…LVSAIDSGLK (370 aa). Chitin-binding positions include 313–314 and 340–343; these read DQ and GGWT. The active-site Proton donor is Glu383. Chitin contacts are provided by residues Tyr384, 450–453, and Trp590; that span reads MTYD.

The protein belongs to the glycosyl hydrolase 18 family. Chitinase class II subfamily.

The enzyme catalyses Random endo-hydrolysis of N-acetyl-beta-D-glucosaminide (1-&gt;4)-beta-linkages in chitin and chitodextrins.. The protein is Chitinase 63 (chtA) of Streptomyces plicatus.